A 257-amino-acid polypeptide reads, in one-letter code: MLAKRIIPCLDVRDGQVVKGVQFRNHEIIGDIVPLAKRYAEEGADELVFYDITASSDGRVVDKSWVARVAEVIDIPFCVAGGIKSAEDAARILEFGADKVSINSPALANPQLITDLADKFGVQCIVVGIDSYYDKETGKYQVYQFTGDEERTKATQWETRDWVQEVQKRGAGEIVLNMMNQDGVRNGYDIEQLNMVREVCNVPLIASGGAGAMEHFAEAYQKANVDGALAASVFHKQVINIGELKQYLKQQGIEVRL.

Residues Asp11 and Asp130 contribute to the active site.

Belongs to the HisA/HisF family. Heterodimer of HisH and HisF.

The protein localises to the cytoplasm. The enzyme catalyses 5-[(5-phospho-1-deoxy-D-ribulos-1-ylimino)methylamino]-1-(5-phospho-beta-D-ribosyl)imidazole-4-carboxamide + L-glutamine = D-erythro-1-(imidazol-4-yl)glycerol 3-phosphate + 5-amino-1-(5-phospho-beta-D-ribosyl)imidazole-4-carboxamide + L-glutamate + H(+). Its pathway is amino-acid biosynthesis; L-histidine biosynthesis; L-histidine from 5-phospho-alpha-D-ribose 1-diphosphate: step 5/9. Its function is as follows. IGPS catalyzes the conversion of PRFAR and glutamine to IGP, AICAR and glutamate. The HisF subunit catalyzes the cyclization activity that produces IGP and AICAR from PRFAR using the ammonia provided by the HisH subunit. This chain is Imidazole glycerol phosphate synthase subunit hisF1 (hisF1), found in Vibrio vulnificus (strain YJ016).